Here is a 121-residue protein sequence, read N- to C-terminus: Putative ferredoxin (121 aa).

To E.coli YkgJ.

The sequence is that of Putative ferredoxin from Acinetobacter calcoaceticus.